The sequence spans 242 residues: MIHIGQLDLEKKAAVVAVILEKSLEISRKAAKMGADLLEIRLDLLGIRDLETAAETIRKVKSETGLPVILTNRSITEGGKWEGKEADRIELLTNLISLKDGPDAVDIELSAGREARDQVIKAAKAHGKTVIVSSHDFSRTPAFQEMKTILEEAFLAGADIAKLAVMPQSRRDVLNLLRVALDAREAGNAVCTIAMGRLGKHTRVIAPFYGSVLTYAAVNSEVSAAPGQFQVDEVKKILELLE.

3-dehydroquinate-binding positions include 39–41 (EIR) and R73. H135 functions as the Proton donor/acceptor in the catalytic mechanism. The active-site Schiff-base intermediate with substrate is K162. Positions 203 and 228 each coordinate 3-dehydroquinate.

Belongs to the type-I 3-dehydroquinase family. In terms of assembly, homodimer.

The catalysed reaction is 3-dehydroquinate = 3-dehydroshikimate + H2O. Its pathway is metabolic intermediate biosynthesis; chorismate biosynthesis; chorismate from D-erythrose 4-phosphate and phosphoenolpyruvate: step 3/7. Functionally, involved in the third step of the chorismate pathway, which leads to the biosynthesis of aromatic amino acids. Catalyzes the cis-dehydration of 3-dehydroquinate (DHQ) and introduces the first double bond of the aromatic ring to yield 3-dehydroshikimate. The sequence is that of 3-dehydroquinate dehydratase from Methanosarcina barkeri (strain Fusaro / DSM 804).